We begin with the raw amino-acid sequence, 874 residues long: Ectonucleotide pyrophosphatase/phosphodiesterase family member 3 (874 aa).

The Cytoplasmic segment spans residues 1–11 (MDSRLALATEE). The helical; Signal-anchor for type II membrane protein transmembrane segment at 12–30 (PIKKDSLKKYKILCVVLLA) threads the bilayer. Topologically, residues 31 to 874 (LLVIVSLGLG…TYLPTFETII (844 aa)) are extracellular. SMB domains follow at residues 51-93 (QGSC…VKST) and 94-138 (QIWT…GESP). 13 disulfide bridges follow: C54–C58, C54–C71, C58–C89, C69–C71, C69–C82, C75–C81, C82–C89, C98–C115, C103–C133, C113–C126, C119–C125, C144–C190, and C152–C364. The Cell attachment site motif lies at 78–80 (RGD). Residues 160–544 (PVILFSMDGF…HGSLNHLLKT (385 aa)) form a phosphodiesterase region. Zn(2+) is bound at residue D167. Residue K204 participates in ATP binding. A Zn(2+)-binding site is contributed by T205. T205 (nucleophile) is an active-site residue. N226 is an ATP binding site. An N-linked (GlcNAc...) asparagine glycan is attached at N236. D275 contributes to the ATP binding site. Residues N279 and N288 are each glycosylated (N-linked (GlcNAc...) asparagine). Y289 is an ATP binding site. Residues D325, H329, D372, and H373 each coordinate Zn(2+). Disulfide bonds link C380-C477, C428-C817, C561-C623, C574-C679, C576-C664, and C786-C796. N425 is a glycosylation site (N-linked (GlcNAc...) asparagine). H482 lines the Zn(2+) pocket. 4 N-linked (GlcNAc...) asparagine glycosylation sites follow: N532, N594, N687, and N701. The interval 581-874 (NTPGLEEQAN…TYLPTFETII (294 aa)) is nuclease. Ca(2+) contacts are provided by D751, N753, D755, H757, and D759. N820 carries an N-linked (GlcNAc...) asparagine glycan.

In terms of assembly, monomer and homodimer. It depends on Zn(2+) as a cofactor. Post-translationally, N-glycosylated. N-glycosylation is necessary for normal transport to the cell membrane, but is not the apical targeting signal. In terms of tissue distribution, detected at the tip of villi in the small intestine. Detected on basophils and mast cells (at protein level). Detected in the epithelial layer of the small intestine; expression is higher in the proximal part and lower in the distal part of the small intestine.

The protein resides in the cell membrane. It localises to the apical cell membrane. It is found in the secreted. The catalysed reaction is a ribonucleoside 5'-triphosphate + H2O = a ribonucleoside 5'-phosphate + diphosphate + H(+). It catalyses the reaction UDP-N-acetyl-alpha-D-glucosamine + H2O = N-acetyl-alpha-D-glucosamine 1-phosphate + UMP + 2 H(+). It carries out the reaction ATP + H2O = AMP + diphosphate + H(+). The enzyme catalyses CTP + H2O = CMP + diphosphate + H(+). The catalysed reaction is GTP + H2O = GMP + diphosphate + H(+). It catalyses the reaction UTP + H2O = UMP + diphosphate + H(+). It carries out the reaction Hydrolytically removes 5'-nucleotides successively from the 3'-hydroxy termini of 3'-hydroxy-terminated oligonucleotides.. The enzyme catalyses P(1),P(3)-bis(5'-adenosyl) triphosphate + H2O = AMP + ADP + 2 H(+). The catalysed reaction is P(1),P(4)-bis(5'-adenosyl) tetraphosphate + H2O = AMP + ATP + 2 H(+). It catalyses the reaction P(1),P(5)-bis(5'-adenosyl) pentaphosphate + H2O = adenosine 5'-tetraphosphate + AMP + 2 H(+). It carries out the reaction P(1),P(4)-bis(5'-guanosyl) tetraphosphate + H2O = GMP + GTP + 2 H(+). Hydrolase that metabolizes extracellular nucleotides, including ATP, GTP, UTP and CTP. Limits mast cells and basophils response during inflammation and during the chronic phases of allergic responses by eliminating extracellular ATP, a signaling molecule activating these cells in an autocrine manner. Metabolizes extracellular ATP in the lumen of the small intestine, and thereby prevents ATP-induced apoptosis of intestinal plasmacytoid dendritic cells. Has a broad specificity and can also hydrolyze UDP-GlcNAc into UMP and GlcNAc-1-phosphate and potentially several other intracellular nucleotide sugars, including UDP-GalNAc, CMP-NeuAc, GDP-Fuc, and UDP-GlcA. Thereby, could modulate glycan biosynthesis and protein glycosylation. Can hydrolyze extracellular dinucleoside polyphosphates, including the vasoactive adenosine polyphosphates as well. In addition, displays an alkaline phosphodiesterase activity in vitro. This is Ectonucleotide pyrophosphatase/phosphodiesterase family member 3 from Mus musculus (Mouse).